A 472-amino-acid chain; its full sequence is Argininosuccinate lyase (472 aa).

Belongs to the lyase 1 family. Argininosuccinate lyase subfamily.

It localises to the cytoplasm. It carries out the reaction 2-(N(omega)-L-arginino)succinate = fumarate + L-arginine. It functions in the pathway amino-acid biosynthesis; L-arginine biosynthesis; L-arginine from L-ornithine and carbamoyl phosphate: step 3/3. The chain is Argininosuccinate lyase from Rhodococcus jostii (strain RHA1).